The chain runs to 186 residues: Inosine/xanthosine triphosphatase (186 aa).

Gln75 serves as a coordination point for Mg(2+).

Belongs to the YjjX NTPase family. As to quaternary structure, homodimer. Requires Mg(2+) as cofactor. Mn(2+) serves as cofactor.

The catalysed reaction is XTP + H2O = XDP + phosphate + H(+). It catalyses the reaction ITP + H2O = IDP + phosphate + H(+). Functionally, phosphatase that hydrolyzes non-canonical purine nucleotides such as XTP and ITP to their respective diphosphate derivatives. Probably excludes non-canonical purines from DNA/RNA precursor pool, thus preventing their incorporation into DNA/RNA and avoiding chromosomal lesions. This Shewanella baltica (strain OS195) protein is Inosine/xanthosine triphosphatase.